A 348-amino-acid chain; its full sequence is Inosamine-phosphate amidinotransferase 1 (348 aa).

Active-site residues include Asp-179 and His-227. Catalysis depends on Cys-332, which acts as the Amidino-cysteine intermediate.

It belongs to the amidinotransferase family. In terms of assembly, homodimer.

The enzyme catalyses 1-amino-1-deoxy-scyllo-inositol 4-phosphate + L-arginine = 1-guanidino-1-deoxy-scyllo-inositol 4-phosphate + L-ornithine. It participates in antibiotic biosynthesis; streptomycin biosynthesis. Catalyzes two non-consecutive transamidination reactions. It converts scyllo-inosamine 4-phosphate into N-amidino-scyllo-inosamine 4-phosphate and N1-amidinostreptamine 6-phosphate into streptidine 6-phosphate. The polypeptide is Inosamine-phosphate amidinotransferase 1 (strB1) (Streptomyces glaucescens).